A 612-amino-acid polypeptide reads, in one-letter code: Phosphopentomutase (612 aa).

Residue alanine 2 is modified to N-acetylalanine. Alpha-D-glucose 1,6-bisphosphate is bound by residues arginine 63 and serine 165. Serine 165 functions as the Phosphoserine intermediate in the catalytic mechanism. The Mg(2+) site is built by serine 165, aspartate 322, aspartate 324, and aspartate 326. Serine 165 is subject to Phosphoserine. Residues aspartate 326, arginine 327, threonine 400, glutamate 424, and lysine 438 each coordinate alpha-D-glucose 1,6-bisphosphate.

This sequence belongs to the phosphohexose mutase family. In terms of assembly, monomer. Requires Mg(2+) as cofactor.

It localises to the cytoplasm. The protein resides in the cytosol. The catalysed reaction is alpha-D-ribose 1-phosphate = D-ribose 5-phosphate. It carries out the reaction 2-deoxy-alpha-D-ribose 1-phosphate = 2-deoxy-D-ribose 5-phosphate. It catalyses the reaction alpha-D-glucose 1-phosphate = alpha-D-glucose 6-phosphate. The enzyme catalyses O-phospho-L-seryl-[protein] + alpha-D-glucose 1-phosphate = alpha-D-glucose 1,6-bisphosphate + L-seryl-[protein]. The catalysed reaction is alpha-D-glucose 1,6-bisphosphate + L-seryl-[protein] = O-phospho-L-seryl-[protein] + alpha-D-glucose 6-phosphate. Functionally, catalyzes the conversion of the nucleoside breakdown products ribose-1-phosphate and deoxyribose-1-phosphate to the corresponding 5-phosphopentoses. Catalyzes the reversible isomerization of alpha-D-glucose 1-phosphate to alpha-D-glucose 6-phosphate but with a lower catalytic efficiency. The mechanism proceeds via the intermediate compound alpha-D-glucose 1,6-bisphosphate. In vitro, also has a low glucose 1,6-bisphosphate synthase activity which is most probably not physiologically relevant. This is Phosphopentomutase (PGM2) from Pongo abelii (Sumatran orangutan).